Consider the following 402-residue polypeptide: Fugralins biosynthesis cluster protein 2 (402 aa).

The next 5 membrane-spanning stretches (helical) occupy residues 28 to 48 (NCLA…CFLL), 109 to 129 (ILIF…AILV), 145 to 165 (IFWW…TAIV), 232 to 252 (VIFG…AVTV), and 264 to 284 (LAPL…IVCV). Disordered stretches follow at residues 312–335 (NPNT…TGPK) and 378–402 (TQDN…PWGV). Polar residues predominate over residues 324-334 (TKGSQLSSTGP). N-linked (GlcNAc...) asparagine glycosylation occurs at N381.

It belongs to the SAT4 family.

It localises to the membrane. It functions in the pathway secondary metabolite biosynthesis. Its function is as follows. Part of the gene cluster that mediates the biosynthesis of the tetraketides fugralins such as linear fugralin A and cyclic fugralin B, volatile compounds that play a role in the asexual reproductive cycle but are not involved in pathogenicity. One of the key features of fugralins is the presence of a double methyl group, which is only rarely encountered in fungal secondary metabolites. As the fugralins cluster does not contain an independent methyltransferase, the PKS FGR1 is probably responsible for adding two methyl groups to the same carbon atom. Fugralin B is similar to fugralin A except for a cyclization between the carboxylic acid C-8 and the alcohol on C-4 resulting in a six membered lactone ring, probably catalyzed by the cyclase FGR4. The exact role of the individual cluster genes remains unknown and further work is needed to unravel the biosynthetic pathway. The polypeptide is Fugralins biosynthesis cluster protein 2 (Gibberella zeae (strain ATCC MYA-4620 / CBS 123657 / FGSC 9075 / NRRL 31084 / PH-1) (Wheat head blight fungus)).